A 1249-amino-acid polypeptide reads, in one-letter code: MKLKEIDRTAMQAWSPAQNHPIYLATGTSAQQLDATFSTNASLEIFELDLSDPSLDMKSCATFSSSHRYHKLIWGPHKMDSKGDVSGVLIAGGENGNIILYDPSKIIAGDKEVVIAQKDKHTGPVRALDVNIFQTNLVASGANESEIYIWDLNNFATPMTPGAKTQPPEDISCIAWNRQVQHILASASPSGRATVWDLRKNEPIIKVSDHSNRMHCSGLAWHPDVATQMVLASEDDRLPVVQMWDLRFASSPLRVLENHARGILAIAWSMADPELLLSCGKDAKILCSNPNTGEVLYELPTNTQWCFDIQWCPRNPAVLSAASFDGRIRVYSIMGGSIDGLRQKQVDKLSSSFGNLDPFGTGQPLPPLQIPQQTSQHSIVLPLKKPPKWIRRPVGASFSFGGKLVTFENVTGQPQQGAEQPRRQPVFISQVVTEKDFLSRSEQLQHVVQSQGFISYCQKKIDASQTDFEKNVWSFLKVNFEEDSRGKYLELLGYRREDLGEKIALALNRVDGSDVALKDSDRVAQSDGEESPAEEGQLLGERIKEEKQECDFLPSAGGGTFNISVSGDIDGLITRALLTGNFESAVDLCLHDNRMADAIILAIAGGQELLAQTQKKYFAKSQSKITRLITAVVMKNWKEIVESCDLKNWREALAAVLTYAKPDEFSALCDLLGARLESEGDSLLRTQACLCYICAGNVERLVACWTKAQDGSNPLSLQDLIEKVVILRKAVQLTQALDTNTVGALLAEKMSQYANLLAAQGSIAAALAFLPDNTNQPDIVQLRDRLCRAQGRSVPGQESSRSSYEGQPLPKGGPGPLAGHPQVSRVQSQQYYPQVRIAPTVTTWSDRTPTALPSHPPAACPSDTQGGNPPPPGFIMHGNVVPNSPAPLPTSPGHMHSQPPPYPQPQPYQPAQQYSLGTGGSAVYRPQQPVAPPASKRYPNAPYVSPVASYSGQPHMYTAQPASSPTSSSAPLPPPPSSGASFQHGGPGAPPSSSAYALPPGTTGTPPAASELPASQRTGPQNGWNDPPALNRVPKKKKLPENFMPPVPITSPIMNPGGDPQPQGLQQQPSASGPRSSHASFPQPHLAGGQPFHGIQQPLAQTGMPPSFSKPNTEGAPGAPIGNTIQHVQALPTEKITKKPIPDEHLILKTTFEDLIQRCLSSATDPQTKRKLDDASKRLECLYDKLRDQTLSPTIISGLHSIARSIETRNYSEGLTVHTHIVSTSNFSETSAFMPVLKVVLSQASKLGV.

WD repeat units lie at residues 4 to 47 (KEID…EIFE), 64 to 111 (SSSH…AGDK), 120 to 160 (KHTG…TPMT), 166 to 206 (QPPE…PIIK), 209 to 254 (DHSN…SPLR), 258 to 298 (NHAR…VLYE), and 301 to 342 (TNTQ…DGLR). The interaction with SEC13 stretch occupies residues 161–470 (PGAKTQPPED…IDASQTDFEK (310 aa)). One copy of the WD 8; interaction with SEC13 repeat lies at 397–429 (SFSFGGKLVTFENVTGQPQQGAEQPRRQPVFIS). The residue at position 423 (Arg423) is an Asymmetric dimethylarginine. A phosphoserine mark is found at Ser526 and Ser531. A Glycyl lysine isopeptide (Lys-Gly) (interchain with G-Cter in ubiquitin) cross-link involves residue Lys647. 3 disordered regions span residues 790 to 829 (QGRS…VQSQ), 842 to 940 (TTWS…RYPN), and 954 to 1123 (PHMY…PIGN). The span at 796-805 (GQESSRSSYE) shows a compositional bias: polar residues. Position 799 is a phosphoserine (Ser799). The tract at residues 800–1142 (SRSSYEGQPL…TEKITKKPIP (343 aa)) is interaction with PDCD6. The ALG-2-binding site motif-2 (ABS-2) motif lies at 873–879 (GFIMHGN). Positions 898-908 (QPPPYPQPQPY) are enriched in pro residues. Low complexity-rich tracts occupy residues 961–970 (PASSPTSSSA) and 991–1007 (PSSS…GTPP). Over residues 1013–1024 (PASQRTGPQNGW) the composition is skewed to polar residues. Residues 1056 to 1074 (PGGDPQPQGLQQQPSASGP) are compositionally biased toward low complexity. A Phosphothreonine modification is found at Thr1190. Position 1192 is a phosphoserine (Ser1192). Residue Lys1246 forms a Glycyl lysine isopeptide (Lys-Gly) (interchain with G-Cter in ubiquitin) linkage.

It belongs to the WD repeat SEC31 family. As to quaternary structure, COPII is composed of at least 5 proteins: the SEC23/24 complex, the SEC13/31 complex and SAR1. SEC13 and SEC31 make a 2:2 tetramer that forms the edge element of the COPII outer coat. The tetramer self-assembles in multiple copies to form the complete polyhedral cage. Interacts (via WD 8) with SEC13. Interacts with PDCD6; interaction takes place in response to cytosolic calcium increase and leads to bridge together the BCR(KLHL12) complex and SEC31A, leading to monoubiquitination. Interacts with KLHL12. In terms of processing, monoubiquitinated by the BCR(KLHL12) E3 ubiquitin ligase complex, leading to regulate the size of COPII coats. Ubiquitously expressed.

Its subcellular location is the cytoplasm. It is found in the cytoplasmic vesicle. The protein localises to the COPII-coated vesicle membrane. It localises to the endoplasmic reticulum membrane. Component of the coat protein complex II (COPII) which promotes the formation of transport vesicles from the endoplasmic reticulum (ER). The coat has two main functions, the physical deformation of the endoplasmic reticulum membrane into vesicles and the selection of cargo molecules. This chain is Protein transport protein Sec31A (Sec31a), found in Rattus norvegicus (Rat).